Here is a 387-residue protein sequence, read N- to C-terminus: ADP,ATP carrier protein 2, mitochondrial (387 aa).

A mitochondrion-targeting transit peptide spans 1–77 (MADQANQPTV…PVMPTPLFAN (77 aa)). Solcar repeat units lie at residues 85–178 (KNFM…FKRL), 190–282 (KWFA…IKPV), and 290–376 (DNFF…LQIL). Transmembrane regions (helical) follow at residues 87–114 (FMIDFMMGGVSAAVSKTAAAPIERVKLL), 155–179 (TANVIRYFPTQALNFAFKDYFKRLF), 188–208 (YWKWFAGNLASGGAAGASSLF), 258–279 (FNISCVGIIVYRGLYFGLYDSI), and 293–313 (FASFALGWLITNGAGLASYPI). 2 residues coordinate ADP: R160 and K172. ADP is bound at residue R317. Residues 317–322 (RRRMMM) form an important for transport activity region. The Nucleotide carrier signature motif signature appears at 317–322 (RRRMMM). Residues 353–373 (AGANILRAIAGAGVLSGYDQL) traverse the membrane as a helical segment.

Belongs to the mitochondrial carrier (TC 2.A.29) family. As to quaternary structure, monomer.

It is found in the mitochondrion inner membrane. The catalysed reaction is ADP(in) + ATP(out) = ADP(out) + ATP(in). Its activity is regulated as follows. The matrix-open state (m-state) is inhibited by the membrane-permeable bongkrekic acid (BKA). The cytoplasmic-open state (c-state) is inhibited by the membrane-impermeable toxic inhibitor carboxyatractyloside (CATR). In terms of biological role, ADP:ATP antiporter that mediates import of ADP into the mitochondrial matrix for ATP synthesis, and export of ATP out to fuel the cell. Cycles between the cytoplasmic-open state (c-state) and the matrix-open state (m-state): operates by the alternating access mechanism with a single substrate-binding site intermittently exposed to either the cytosolic (c-state) or matrix (m-state) side of the inner mitochondrial membrane. This chain is ADP,ATP carrier protein 2, mitochondrial (ANT2), found in Zea mays (Maize).